The sequence spans 296 residues: Malonyl-[acyl-carrier protein] O-methyltransferase (296 aa).

Belongs to the methyltransferase superfamily.

It catalyses the reaction malonyl-[ACP] + S-adenosyl-L-methionine = malonyl-[ACP] methyl ester + S-adenosyl-L-homocysteine. Its pathway is cofactor biosynthesis; biotin biosynthesis. Its function is as follows. Converts the free carboxyl group of a malonyl-thioester to its methyl ester by transfer of a methyl group from S-adenosyl-L-methionine (SAM). It allows to synthesize pimeloyl-ACP via the fatty acid synthetic pathway. The sequence is that of Malonyl-[acyl-carrier protein] O-methyltransferase from Methylovorus sp. (strain MP688).